Consider the following 224-residue polypeptide: tRNA (guanine-N(7)-)-methyltransferase (224 aa).

The S-adenosyl-L-methionine site is built by E52, D77, and D126. The active site involves D126. Positions 130 and 162 each coordinate substrate.

This sequence belongs to the class I-like SAM-binding methyltransferase superfamily. TrmB family.

It catalyses the reaction guanosine(46) in tRNA + S-adenosyl-L-methionine = N(7)-methylguanosine(46) in tRNA + S-adenosyl-L-homocysteine. Its pathway is tRNA modification; N(7)-methylguanine-tRNA biosynthesis. In terms of biological role, catalyzes the formation of N(7)-methylguanine at position 46 (m7G46) in tRNA. In Christiangramia forsetii (strain DSM 17595 / CGMCC 1.15422 / KT0803) (Gramella forsetii), this protein is tRNA (guanine-N(7)-)-methyltransferase.